The sequence spans 344 residues: Heat-inducible transcription repressor HrcA (344 aa).

Belongs to the HrcA family.

Its function is as follows. Negative regulator of class I heat shock genes (grpE-dnaK-dnaJ and groELS operons). Prevents heat-shock induction of these operons. This is Heat-inducible transcription repressor HrcA from Streptococcus agalactiae serotype Ia (strain ATCC 27591 / A909 / CDC SS700).